The sequence spans 466 residues: Sulfate adenylyltransferase subunit 1 (466 aa).

The tr-type G domain occupies 22 to 237 (KELVRFLTCG…LNTIDVKTQE (216 aa)). The tract at residues 31–38 (GSVDDGKS) is G1. 31–38 (GSVDDGKS) is a binding site for GTP. Residues 89 to 93 (GITID) are G2. The tract at residues 110–113 (DTPG) is G3. GTP is bound by residues 110 to 114 (DTPGH) and 165 to 168 (NKMD). The tract at residues 165–168 (NKMD) is G4. Residues 202 to 204 (SAL) form a G5 region.

The protein belongs to the TRAFAC class translation factor GTPase superfamily. Classic translation factor GTPase family. CysN/NodQ subfamily. In terms of assembly, heterodimer composed of CysD, the smaller subunit, and CysN.

The enzyme catalyses sulfate + ATP + H(+) = adenosine 5'-phosphosulfate + diphosphate. It participates in sulfur metabolism; hydrogen sulfide biosynthesis; sulfite from sulfate: step 1/3. In terms of biological role, with CysD forms the ATP sulfurylase (ATPS) that catalyzes the adenylation of sulfate producing adenosine 5'-phosphosulfate (APS) and diphosphate, the first enzymatic step in sulfur assimilation pathway. APS synthesis involves the formation of a high-energy phosphoric-sulfuric acid anhydride bond driven by GTP hydrolysis by CysN coupled to ATP hydrolysis by CysD. The protein is Sulfate adenylyltransferase subunit 1 of Colwellia psychrerythraea (strain 34H / ATCC BAA-681) (Vibrio psychroerythus).